We begin with the raw amino-acid sequence, 400 residues long: Tryptophan synthase beta chain (400 aa).

K92 is modified (N6-(pyridoxal phosphate)lysine).

The protein belongs to the TrpB family. Tetramer of two alpha and two beta chains. Pyridoxal 5'-phosphate serves as cofactor.

It catalyses the reaction (1S,2R)-1-C-(indol-3-yl)glycerol 3-phosphate + L-serine = D-glyceraldehyde 3-phosphate + L-tryptophan + H2O. The protein operates within amino-acid biosynthesis; L-tryptophan biosynthesis; L-tryptophan from chorismate: step 5/5. Functionally, the beta subunit is responsible for the synthesis of L-tryptophan from indole and L-serine. This Neisseria gonorrhoeae (strain NCCP11945) protein is Tryptophan synthase beta chain.